Reading from the N-terminus, the 336-residue chain is CMP-sialic acid transporter (336 aa).

The Cytoplasmic portion of the chain corresponds to M1–S9. The chain crosses the membrane as a helical span at residues L10–A30. Residues L31 to T45 lie on the Lumenal side of the membrane. A helical membrane pass occupies residues T46–A64. K55 provides a ligand contact to CMP-N-acetyl-beta-neuraminate. Over K65–E87 the chain is Cytoplasmic. Residues L88–A108 traverse the membrane as a helical segment. Position 101 to 102 (Q101 to N102) interacts with CMP-N-acetyl-beta-neuraminate. At L109 to A114 the chain is on the lumenal side. The chain crosses the membrane as a helical span at residues A115–M135. A CMP-N-acetyl-beta-neuraminate-binding site is contributed by Y117–K124. Topologically, residues L136 to S141 are cytoplasmic. Residues K142–W160 form a helical membrane-spanning segment. Residues K161 to L175 lie on the Lumenal side of the membrane. The chain crosses the membrane as a helical span at residues L176 to E196. A CMP-N-acetyl-beta-neuraminate-binding site is contributed by S188. The Cytoplasmic segment spans residues K197–R209. N210–Y214 serves as a coordination point for CMP-N-acetyl-beta-neuraminate. The chain crosses the membrane as a helical span at residues N210–S228. Residues D229 to T243 are Lumenal-facing. The helical transmembrane segment at Y244–V262 threads the bilayer. Over V263–N269 the chain is Cytoplasmic. Residues I270 to V288 traverse the membrane as a helical segment. K272 is a binding site for CMP-N-acetyl-beta-neuraminate. Topologically, residues M289–T296 are lumenal. The helical transmembrane segment at L297–L315 threads the bilayer. The Cytoplasmic portion of the chain corresponds to P316–V336. The interval P316 to V336 is disordered.

This sequence belongs to the nucleotide-sugar transporter family. SLC35A subfamily. Monomer.

The protein localises to the golgi apparatus membrane. The enzyme catalyses CMP-N-acetyl-beta-neuraminate(in) + CMP(out) = CMP-N-acetyl-beta-neuraminate(out) + CMP(in). The catalysed reaction is CMP-N-acetyl-beta-neuraminate(in) + AMP(out) = CMP-N-acetyl-beta-neuraminate(out) + AMP(in). It carries out the reaction CDP-L-ribitol(in) + CDP(out) = CDP-L-ribitol(out) + CDP(in). It catalyses the reaction UMP(out) + CMP-N-acetyl-beta-neuraminate(in) = UMP(in) + CMP-N-acetyl-beta-neuraminate(out). Transports CMP-sialic acid from the cytosol into the Golgi apparatus, functioning as an antiporter that exchanges CMP-sialic acid for CMP. Binds both CMP-sialic acid and free CMP, but has higher affinity for free CMP. Also able to exchange CMP-sialic acid for AMP and UMP. Also mediates the transport of CDP-ribitol. The polypeptide is CMP-sialic acid transporter (SLC35A1) (Cricetulus griseus (Chinese hamster)).